A 416-amino-acid polypeptide reads, in one-letter code: Serine hydroxymethyltransferase (416 aa).

Residues leucine 121 and 125–127 (GHL) each bind (6S)-5,6,7,8-tetrahydrofolate. Lysine 229 is subject to N6-(pyridoxal phosphate)lysine. (6S)-5,6,7,8-tetrahydrofolate-binding positions include glutamate 245 and 354 to 356 (SPF).

The protein belongs to the SHMT family. In terms of assembly, homodimer. It depends on pyridoxal 5'-phosphate as a cofactor.

It localises to the cytoplasm. The enzyme catalyses (6R)-5,10-methylene-5,6,7,8-tetrahydrofolate + glycine + H2O = (6S)-5,6,7,8-tetrahydrofolate + L-serine. The protein operates within one-carbon metabolism; tetrahydrofolate interconversion. It participates in amino-acid biosynthesis; glycine biosynthesis; glycine from L-serine: step 1/1. In terms of biological role, catalyzes the reversible interconversion of serine and glycine with tetrahydrofolate (THF) serving as the one-carbon carrier. This reaction serves as the major source of one-carbon groups required for the biosynthesis of purines, thymidylate, methionine, and other important biomolecules. Also exhibits THF-independent aldolase activity toward beta-hydroxyamino acids, producing glycine and aldehydes, via a retro-aldol mechanism. The chain is Serine hydroxymethyltransferase from Aliivibrio salmonicida (strain LFI1238) (Vibrio salmonicida (strain LFI1238)).